The following is a 294-amino-acid chain: RNA polymerase sigma-K factor (294 aa).

Residues 1-20 (MVTGVFAALGFVVKELVFLV) constitute a propeptide that is removed on maturation. Residues 1 to 156 (MVTGVFAALG…VNNCFFIFKS (156 aa)) are encoded by spoIVCB. The short motif at 79 to 92 (DLISIGTIGLIKGI) is the Polymerase core binding element. The interval 114-165 (EIVITKGGCIHPSLIRFNIYGVRIHNGNFFHDKVNNCFFIFKSMPPLFVMNN) is not present in recombined mature factor. Residues 157-294 (MPPLFVMNNE…KEKRKKAKGK (138 aa)) are encoded by spoIIIC. Residues 251–270 (QREIAKELGISRSYVSRIEK) constitute a DNA-binding region (H-T-H motif).

This sequence belongs to the sigma-70 factor family.

In terms of biological role, sigma factors are initiation factors that promote the attachment of RNA polymerase to specific initiation sites and are then released. This sigma factor is responsible for the expression of sporulation specific genes in the mother cell. The chain is RNA polymerase sigma-K factor (sigK) from Bacillus subtilis (strain 168).